The chain runs to 638 residues: Neuroendocrine convertase 2 (638 aa).

The signal sequence occupies residues 1-25 (MKGGCVSQWKAAAGFLFCVMVFASA). Residues 26 to 109 (ERPVFTNHFL…QQEGFDRKKR (84 aa)) constitute a propeptide that is removed on maturation. The Peptidase S8 domain maps to 129–453 (QWYLINTGQA…YGVLDAGAMV (325 aa)). Active-site charge relay system residues include D167 and H208. Cystine bridges form between C225-C376 and C317-C347. N375 carries an N-linked (GlcNAc...) asparagine glycan. S384 acts as the Charge relay system in catalysis. The P/Homo B domain occupies 461-597 (TVPERFHCVG…TLMLHGTQSA (137 aa)). A disulfide bridge connects residues C468 and C494. N-linked (GlcNAc...) asparagine glycosylation is found at N514 and N524.

Belongs to the peptidase S8 family. Furin subfamily.

It is found in the cytoplasmic vesicle. Its subcellular location is the secretory vesicle. The protein resides in the secreted. The catalysed reaction is Release of protein hormones and neuropeptides from their precursors, generally by hydrolysis of -Lys-Arg-|- bonds.. Functionally, serine endopeptidase which is involved in the processing of hormone and other protein precursors at sites comprised of pairs of basic amino acid residues. Responsible for the release of glucagon from proglucagon in pancreatic A cells. In Pongo abelii (Sumatran orangutan), this protein is Neuroendocrine convertase 2 (PCSK2).